Reading from the N-terminus, the 154-residue chain is Interleukin-2 (154 aa).

Positions 1–20 are cleaved as a signal peptide; sequence MYKMQLLSCIALTLALVANG. The O-linked (GalNAc...) threonine glycan is linked to Thr23. Cys78 and Cys126 form a disulfide bridge.

This sequence belongs to the IL-2 family.

The protein resides in the secreted. Its function is as follows. Cytokine produced by activated CD4-positive helper T-cells and to a lesser extend activated CD8-positive T-cells and natural killer (NK) cells that plays pivotal roles in the immune response and tolerance. Binds to a receptor complex composed of either the high-affinity trimeric IL-2R (IL2RA/CD25, IL2RB/CD122 and IL2RG/CD132) or the low-affinity dimeric IL-2R (IL2RB and IL2RG). Interaction with the receptor leads to oligomerization and conformation changes in the IL-2R subunits resulting in downstream signaling starting with phosphorylation of JAK1 and JAK3. In turn, JAK1 and JAK3 phosphorylate the receptor to form a docking site leading to the phosphorylation of several substrates including STAT5. This process leads to activation of several pathways including STAT, phosphoinositide-3-kinase/PI3K and mitogen-activated protein kinase/MAPK pathways. Functions as a T-cell growth factor and can increase NK-cell cytolytic activity as well. Promotes strong proliferation of activated B-cells and subsequently immunoglobulin production. Plays a pivotal role in regulating the adaptive immune system by controlling the survival and proliferation of regulatory T-cells, which are required for the maintenance of immune tolerance. Moreover, participates in the differentiation and homeostasis of effector T-cell subsets, including Th1, Th2, Th17 as well as memory CD8-positive T-cells. The polypeptide is Interleukin-2 (IL2) (Delphinapterus leucas (Beluga whale)).